The chain runs to 348 residues: D-alanine--D-alanine ligase (348 aa).

Positions 132–334 (KRILEVAGVP…YSDLIKELVV (203 aa)) constitute an ATP-grasp domain. Residue 162–217 (LEKLTFPVFVKPANMGSSVGISKAENESELRSAIDLALKYDSRILIEQGVVAREIE) participates in ATP binding. Positions 288, 301, and 303 each coordinate Mg(2+).

Belongs to the D-alanine--D-alanine ligase family. It depends on Mg(2+) as a cofactor. Mn(2+) serves as cofactor.

It is found in the cytoplasm. The catalysed reaction is 2 D-alanine + ATP = D-alanyl-D-alanine + ADP + phosphate + H(+). It functions in the pathway cell wall biogenesis; peptidoglycan biosynthesis. In terms of biological role, cell wall formation. This is D-alanine--D-alanine ligase from Streptococcus thermophilus (strain ATCC BAA-250 / LMG 18311).